A 482-amino-acid chain; its full sequence is Glutamyl-tRNA(Gln) amidotransferase subunit A (482 aa).

Active-site charge relay system residues include Lys-75 and Ser-150. Catalysis depends on Ser-174, which acts as the Acyl-ester intermediate.

It belongs to the amidase family. GatA subfamily. Heterotrimer of A, B and C subunits.

It catalyses the reaction L-glutamyl-tRNA(Gln) + L-glutamine + ATP + H2O = L-glutaminyl-tRNA(Gln) + L-glutamate + ADP + phosphate + H(+). In terms of biological role, allows the formation of correctly charged Gln-tRNA(Gln) through the transamidation of misacylated Glu-tRNA(Gln) in organisms which lack glutaminyl-tRNA synthetase. The reaction takes place in the presence of glutamine and ATP through an activated gamma-phospho-Glu-tRNA(Gln). This chain is Glutamyl-tRNA(Gln) amidotransferase subunit A, found in Acaryochloris marina (strain MBIC 11017).